Reading from the N-terminus, the 117-residue chain is Fluoride-specific ion channel FluC 2 (117 aa).

Helical transmembrane passes span Met-1–Ile-21 and Phe-46–Val-66. 2 residues coordinate Na(+): Gly-71 and Thr-74. A helical membrane pass occupies residues Leu-95–Tyr-115.

It belongs to the fluoride channel Fluc/FEX (TC 1.A.43) family.

It is found in the cell membrane. The enzyme catalyses fluoride(in) = fluoride(out). Its activity is regulated as follows. Na(+) is not transported, but it plays an essential structural role and its presence is essential for fluoride channel function. Fluoride-specific ion channel. Important for reducing fluoride concentration in the cell, thus reducing its toxicity. The polypeptide is Fluoride-specific ion channel FluC 2 (Staphylococcus aureus (strain MSSA476)).